The primary structure comprises 95 residues: Protein TusB (95 aa).

This sequence belongs to the DsrH/TusB family. In terms of assembly, heterohexamer, formed by a dimer of trimers. The hexameric TusBCD complex contains 2 copies each of TusB, TusC and TusD. The TusBCD complex interacts with TusE.

The protein resides in the cytoplasm. Its function is as follows. Part of a sulfur-relay system required for 2-thiolation of 5-methylaminomethyl-2-thiouridine (mnm(5)s(2)U) at tRNA wobble positions. The protein is Protein TusB of Klebsiella pneumoniae subsp. pneumoniae (strain ATCC 700721 / MGH 78578).